Consider the following 296-residue polypeptide: UDP-N-acetylenolpyruvoylglucosamine reductase (296 aa).

The FAD-binding PCMH-type domain maps to 19–203 (KVGGFAEYFS…LETTQKNLKK (185 aa)). Arginine 166 is a catalytic residue. Residue serine 217 is the Proton donor of the active site. Glutamate 287 is an active-site residue.

Belongs to the MurB family. Requires FAD as cofactor.

The protein localises to the cytoplasm. The enzyme catalyses UDP-N-acetyl-alpha-D-muramate + NADP(+) = UDP-N-acetyl-3-O-(1-carboxyvinyl)-alpha-D-glucosamine + NADPH + H(+). It participates in cell wall biogenesis; peptidoglycan biosynthesis. Its function is as follows. Cell wall formation. The chain is UDP-N-acetylenolpyruvoylglucosamine reductase from Prochlorococcus marinus subsp. pastoris (strain CCMP1986 / NIES-2087 / MED4).